The primary structure comprises 408 residues: Cobalt-precorrin-5B C(1)-methyltransferase (408 aa).

This sequence belongs to the CbiD family.

It catalyses the reaction Co-precorrin-5B + S-adenosyl-L-methionine = Co-precorrin-6A + S-adenosyl-L-homocysteine. It participates in cofactor biosynthesis; adenosylcobalamin biosynthesis; cob(II)yrinate a,c-diamide from sirohydrochlorin (anaerobic route): step 6/10. Functionally, catalyzes the methylation of C-1 in cobalt-precorrin-5B to form cobalt-precorrin-6A. In Clostridioides difficile (strain 630) (Peptoclostridium difficile), this protein is Cobalt-precorrin-5B C(1)-methyltransferase.